Here is a 210-residue protein sequence, read N- to C-terminus: MTQMRFTKEDFDTFTIEGLDPRMEVLKEQVRPKLTLLGEHFAPTLSALTGDEMFPHVAKHARRSVNPPADSWVAFANSKRGYKKLPHFQIGLWDTHMFVWFAIIYESPIKEEYGRLLEAKQEDITKQIPGHFVWSPDHTKPGAYKQSDMDQEQLKTLFERLQTVKKAELLCGIQLQKEDVINMNNNEFLQTIEDAFRKLSFLYTLTQKVS.

This sequence belongs to the UPF0637 family.

This Bacillus velezensis (strain DSM 23117 / BGSC 10A6 / LMG 26770 / FZB42) (Bacillus amyloliquefaciens subsp. plantarum) protein is UPF0637 protein RBAM_014510.